Reading from the N-terminus, the 202-residue chain is Casparian strip membrane protein 4 (202 aa).

Over 1 to 40 (MKSDSIAVDVPAESSSAIKGKAPLLGLARDHTGSGGYKRG) the chain is Cytoplasmic. Residues 41–61 (LSIFDFLLRLAAIVAALAAAA) traverse the membrane as a helical segment. At 62–90 (TMGTSDETLPFFTQFLQFEASYDDLPTFQ) the chain is on the extracellular side. A helical membrane pass occupies residues 91 to 111 (FFVVAIAIVTGYLVLSLPFSV). Residues 112–130 (VTIVRPLAVAPRLLLLVLD) are Cytoplasmic-facing. The chain crosses the membrane as a helical span at residues 131 to 151 (TAALALDTAAASAAAAIVYLA). Residues 152-176 (HNGNTNTNWLPICQQFGDFCQKTSG) are Extracellular-facing. The helical transmembrane segment at 177–197 (AVVSAFASVTFLAILVVISGV) threads the bilayer. Topologically, residues 198–202 (SLKRP) are cytoplasmic.

Belongs to the Casparian strip membrane proteins (CASP) family. As to quaternary structure, homodimer and heterodimers.

The protein resides in the cell membrane. In terms of biological role, regulates membrane-cell wall junctions and localized cell wall deposition. Required for establishment of the Casparian strip membrane domain (CSD) and the subsequent formation of Casparian strips, a cell wall modification of the root endodermis that determines an apoplastic barrier between the intraorganismal apoplasm and the extraorganismal apoplasm and prevents lateral diffusion. In Arabidopsis lyrata subsp. lyrata (Lyre-leaved rock-cress), this protein is Casparian strip membrane protein 4.